A 174-amino-acid polypeptide reads, in one-letter code: Translation initiation factor IF-3 (174 aa).

Belongs to the IF-3 family. In terms of assembly, monomer.

The protein localises to the cytoplasm. IF-3 binds to the 30S ribosomal subunit and shifts the equilibrium between 70S ribosomes and their 50S and 30S subunits in favor of the free subunits, thus enhancing the availability of 30S subunits on which protein synthesis initiation begins. This is Translation initiation factor IF-3 from Azorhizobium caulinodans (strain ATCC 43989 / DSM 5975 / JCM 20966 / LMG 6465 / NBRC 14845 / NCIMB 13405 / ORS 571).